We begin with the raw amino-acid sequence, 218 residues long: Very-long-chain (3R)-3-hydroxyacyl-CoA dehydratase hpo-8 (218 aa).

Helical transmembrane passes span 15 to 35, 44 to 64, 86 to 106, 137 to 157, and 176 to 196; these read ILGWSAILVKTVLGLANGLTW, FELKIFQTAAILEVIHAIVGL, ILHLCSTARFSIGVPLLLVAW, LFYVLYPMGVSGELLTLFASL, and MGISFWWVLIIAALSYIPGFP. Active-site residues include Y142 and E149.

This sequence belongs to the very long-chain fatty acids dehydratase HACD family.

The protein resides in the membrane. The catalysed reaction is a very-long-chain (3R)-3-hydroxyacyl-CoA = a very-long-chain (2E)-enoyl-CoA + H2O. Its pathway is lipid metabolism; fatty acid biosynthesis. In terms of biological role, catalyzes the third of the four reactions of the long-chain fatty acids elongation cycle. This endoplasmic reticulum-bound enzymatic process, allows the addition of two carbons to the chain of long- and very long-chain fatty acids/VLCFAs per cycle. This enzyme catalyzes the dehydration of the 3-hydroxyacyl-CoA intermediate into trans-2,3-enoyl-CoA, within each cycle of fatty acid elongation. Thereby, it participates in the production of VLCFAs of different chain lengths that are involved in multiple biological processes as precursors of membrane lipids and lipid mediators. The sequence is that of Very-long-chain (3R)-3-hydroxyacyl-CoA dehydratase hpo-8 (hpo-8) from Caenorhabditis elegans.